The following is a 414-amino-acid chain: Protein RecA (414 aa).

78-85 (GPESSGKT) is a binding site for ATP. Positions 361 to 384 (QEKAVEALKKEEGSKEDALTGNKD) are enriched in basic and acidic residues. The tract at residues 361 to 414 (QEKAVEALKKEEGSKEDALTGNKDETDDSAQKNSAASKAKRAEVVGLPADDSLF) is disordered.

It belongs to the RecA family.

The protein resides in the cytoplasm. Functionally, can catalyze the hydrolysis of ATP in the presence of single-stranded DNA, the ATP-dependent uptake of single-stranded DNA by duplex DNA, and the ATP-dependent hybridization of homologous single-stranded DNAs. It interacts with LexA causing its activation and leading to its autocatalytic cleavage. In Treponema denticola (strain ATCC 35405 / DSM 14222 / CIP 103919 / JCM 8153 / KCTC 15104), this protein is Protein RecA.